A 529-amino-acid chain; its full sequence is UDP-glucuronosyltransferase 2B28 (529 aa).

The first 24 residues, 1-24 (MALKWTSVLLLIHLGCYFSSGSCG), serve as a signal peptide directing secretion. Position 135 is an N6-succinyllysine (lysine 135). N-linked (GlcNAc...) asparagine glycosylation is present at asparagine 315. A helical membrane pass occupies residues 495 to 517 (GFLLACVATVIFVVTKFCLFCFW).

This sequence belongs to the UDP-glycosyltransferase family. In terms of tissue distribution, expressed in the liver, breast and kidney.

It is found in the endoplasmic reticulum membrane. Its subcellular location is the cytoplasm. The protein localises to the perinuclear region. The catalysed reaction is glucuronate acceptor + UDP-alpha-D-glucuronate = acceptor beta-D-glucuronoside + UDP + H(+). UDP-glucuronosyltransferase (UGT) that catalyzes phase II biotransformation reactions in which lipophilic substrates are conjugated with glucuronic acid to increase the metabolite's water solubility, thereby facilitating excretion into either the urine or bile. Essential for the elimination and detoxification of drugs, xenobiotics and endogenous compounds. Catalyzes the glucuronidation of endogenous steroid hormones such as androgens (androsterone, 3alpha-androstanediol) and estrogens (estradiol, estrone). Catalyzes the glucuronidation of bile acid substrates, which are natural detergents for dietary lipids absorption. Displays glucuronidation activity toward the phenolic compounds eugenol. Functionally, lack UDP-glucuronosyltransferase (UGT) activity. The polypeptide is UDP-glucuronosyltransferase 2B28 (Homo sapiens (Human)).